Here is a 75-residue protein sequence, read N- to C-terminus: Exodeoxyribonuclease 7 small subunit (75 aa).

The protein belongs to the XseB family. In terms of assembly, heterooligomer composed of large and small subunits.

The protein resides in the cytoplasm. The catalysed reaction is Exonucleolytic cleavage in either 5'- to 3'- or 3'- to 5'-direction to yield nucleoside 5'-phosphates.. Functionally, bidirectionally degrades single-stranded DNA into large acid-insoluble oligonucleotides, which are then degraded further into small acid-soluble oligonucleotides. The sequence is that of Exodeoxyribonuclease 7 small subunit from Chlamydia caviae (strain ATCC VR-813 / DSM 19441 / 03DC25 / GPIC) (Chlamydophila caviae).